The following is a 317-amino-acid chain: Porphobilinogen deaminase (317 aa).

The residue at position 242 (Cys-242) is an S-(dipyrrolylmethanemethyl)cysteine.

Belongs to the HMBS family. In terms of assembly, monomer. Dipyrromethane serves as cofactor.

The enzyme catalyses 4 porphobilinogen + H2O = hydroxymethylbilane + 4 NH4(+). Its pathway is porphyrin-containing compound metabolism; protoporphyrin-IX biosynthesis; coproporphyrinogen-III from 5-aminolevulinate: step 2/4. Its function is as follows. Tetrapolymerization of the monopyrrole PBG into the hydroxymethylbilane pre-uroporphyrinogen in several discrete steps. The protein is Porphobilinogen deaminase of Colwellia psychrerythraea (strain 34H / ATCC BAA-681) (Vibrio psychroerythus).